The primary structure comprises 482 residues: Aspartyl/glutamyl-tRNA(Asn/Gln) amidotransferase subunit B (482 aa).

Belongs to the GatB/GatE family. GatB subfamily. In terms of assembly, heterotrimer of A, B and C subunits.

The catalysed reaction is L-glutamyl-tRNA(Gln) + L-glutamine + ATP + H2O = L-glutaminyl-tRNA(Gln) + L-glutamate + ADP + phosphate + H(+). The enzyme catalyses L-aspartyl-tRNA(Asn) + L-glutamine + ATP + H2O = L-asparaginyl-tRNA(Asn) + L-glutamate + ADP + phosphate + 2 H(+). Functionally, allows the formation of correctly charged Asn-tRNA(Asn) or Gln-tRNA(Gln) through the transamidation of misacylated Asp-tRNA(Asn) or Glu-tRNA(Gln) in organisms which lack either or both of asparaginyl-tRNA or glutaminyl-tRNA synthetases. The reaction takes place in the presence of glutamine and ATP through an activated phospho-Asp-tRNA(Asn) or phospho-Glu-tRNA(Gln). The polypeptide is Aspartyl/glutamyl-tRNA(Asn/Gln) amidotransferase subunit B (Azotobacter vinelandii (strain DJ / ATCC BAA-1303)).